The sequence spans 272 residues: Transcription factor PU.1 (272 aa).

Residues serine 126–glutamate 165 are disordered. Phosphoserine is present on residues serine 142 and serine 148. Low complexity predominate over residues leucine 155–glutamate 165. Positions isoleucine 172–serine 255 form a DNA-binding region, ETS. DNA-binding residues include lysine 219, arginine 232, arginine 235, and lysine 245.

The protein belongs to the ETS family. In terms of assembly, binds DNA as a monomer. Can form homomers. Directly interacts with CEBPD/NF-IL6-beta; this interaction does not affect DNA-binding properties of each partner. Interacts with NONO/p54(nrb). Interacts with RUNX1/AML1. Interacts with GFI1; the interaction represses SPI1 transcriptional activity, hence blocks SPI1-induced macrophage differentiation of myeloid progenitor cells. Interacts with CEBPE. Interacts with IRF4/Pip and IRF8. Interacts with JUN. Interacts with RB1. Interacts with TBP. As to expression, expressed in spleen, thymus and bone-marrow macrophages.

It is found in the nucleus. With respect to regulation, transcriptional activity at macrophage-specific genes is inhibited by interaction with GFI1, which results in inhibition of SPI1-induced macrophage differentiation of myeloid progenitor cells, but not that of the granulocyte lineage. Its function is as follows. Pioneer transcription factor, which controls hematopoietic cell fate by decompacting stem cell heterochromatin and allowing other transcription factors to enter otherwise inaccessible genomic sites. Once in open chromatin, can directly control gene expression by binding genetic regulatory elements and can also more broadly influence transcription by recruiting transcription factors, such as interferon regulatory factors (IRFs), to otherwise inaccessible genomic regions. Transcriptionally activates genes important for myeloid and lymphoid lineages, such as CSF1R. Transcriptional activation from certain promoters, possibly containing low affinity binding sites, is achieved cooperatively with other transcription factors. FCER1A transactivation is achieved in cooperation with GATA1. May be particularly important for the pro- to pre-B cell transition. Binds (via the ETS domain) onto the purine-rich DNA core sequence 5'-GAGGAA-3', also known as the PU-box. In vitro can bind RNA and interfere with pre-mRNA splicing. This chain is Transcription factor PU.1 (Spi1), found in Mus musculus (Mouse).